The sequence spans 2362 residues: Filaggrin-2 (2362 aa).

An S-100-like region spans residues 1 to 81 (MAYLLRSVVT…TEFILMIFKL (81 aa)). 2 consecutive EF-hand domains span residues 8–43 (VVTI…EFRP) and 49–84 (DDPD…LALA). The Ca(2+) site is built by aspartate 62, aspartate 64, aspartate 66, arginine 68, and glutamate 73. Disordered stretches follow at residues 96–238 (ASGS…GLSC) and 284–2109 (GCCR…SSIP). The span at 111–120 (EESETEEEEE) shows a compositional bias: acidic residues. 2 stretches are compositionally biased toward basic and acidic residues: residues 159–174 (KRLE…EESR) and 189–214 (NKEK…PSRE). 2 Filaggrin repeats span residues 261 to 308 (GYNT…NQSC) and 373 to 414 (HSSC…SNGF). Polar residues-rich tracts occupy residues 284 to 317 (GCCR…CQSG), 342 to 375 (SCSQ…SHSS), and 383 to 395 (GATQ…QQRM). Residues 396–411 (SSCGHSSSSHQKGCSS) show a composition bias toward low complexity. Composition is skewed to polar residues over residues 421 to 443 (ASGS…SSGF) and 450 to 469 (SGQS…SGYS). Composition is skewed to low complexity over residues 474 to 519 (GSGQ…QSSG), 539 to 550 (GSRQSSGSEQHG), and 567 to 580 (SQSS…SGSQ). One copy of the Filaggrin 3 repeat lies at 555–607 (QSSGSGKHETGPSQSSSSGHHGSGSQQHGGGSGQSTGFGEHESSSGHSSSSGQ). The segment covering 581-590 (QHGGGSGQST) has biased composition (gly residues). Over residues 599–618 (SGHSSSSGQHRSGSRHSSGS) the composition is skewed to low complexity. The span at 632 to 653 (GHHGSGSQQHGGGSGNSTGFGE) shows a compositional bias: gly residues. Residues 654–675 (HGSSSHPLPSSGQNESSSGQSS) show a composition bias toward low complexity. A Filaggrin 4 repeat occupies 672 to 723 (GQSSRSERHGTGSGQSSGFGQHGSGSHQSSSSGHNEYGSGQTSSSWPHGKGS). A compositionally biased stretch (gly residues) spans 682–694 (TGSGQSSGFGQHG). Composition is skewed to low complexity over residues 695–705 (SGSHQSSSSGH), 728–754 (GYGE…QSSS), and 780–798 (GYGE…WQHG). The segment covering 826-838 (TGSGQSLGFGQHG) has biased composition (gly residues). Positions 846–864 (SSGHYESVSEPSSSSWQHG) are enriched in low complexity. The Filaggrin 5 repeat unit spans residues 880–927 (HGQSSSAWNHGNESGQSNGYGEHESGHGQSSSAWNHGNESGQSNGFGE). 2 stretches are compositionally biased toward polar residues: residues 886–896 (AWNHGNESGQS) and 912–925 (AWNH…SNGF). Basic and acidic residues predominate over residues 973–982 (ESSEGEEHSV). One copy of the Filaggrin 6 repeat lies at 984–1035 (PRRYSGYGHGQGQAGHQQRESGYGQRGRPQGPSQDSSRQPQAGHGQPSQSGY). Over residues 1014-1035 (GPSQDSSRQPQAGHGQPSQSGY) the composition is skewed to polar residues. Residues 1047-1059 (EYSEGEAHSEVSQ) are compositionally biased toward basic and acidic residues. Residues 1067–1077 (CHCHCHGQARH) are compositionally biased toward basic residues. Positions 1104-1121 (GPGQPSQSGSRRSPRSQP) are enriched in low complexity. A compositionally biased stretch (gly residues) spans 1142-1152 (SGHGHGQGQGQ). Positions 1162 to 1174 (HGQQGRPQGPSQD) are enriched in polar residues. The stretch at 1165–1210 (QGRPQGPSQDSSRQPQAGQGQPSQSGSGRSPRRSPVHPESSEGEEH) is one Filaggrin 7 repeat. Residues 1175-1193 (SSRQPQAGQGQPSQSGSGR) are compositionally biased toward low complexity. Phosphoserine is present on residues serine 1198, serine 1204, and serine 1205. A compositionally biased stretch (gly residues) spans 1220–1232 (SGHGHGQGQGQGQ). The segment covering 1255–1273 (SSRQPQAGQGQPSQSGSGR) has biased composition (low complexity). A phosphoserine mark is found at serine 1278, serine 1284, and serine 1285. One copy of the Filaggrin 8 repeat lies at 1280–1334 (VHPESSEGEEHSVVPQRHSGSGHGHGQGQGQAGHQQRESVHGQPVRPEVPTQDSS). Positions 1300–1310 (SGHGHGQGQGQ) are enriched in gly residues. The segment covering 1333–1351 (SSRQPQAGQGQPSQSGSGR) has biased composition (low complexity). Residues serine 1356, serine 1362, and serine 1363 each carry the phosphoserine modification. Positions 1377-1396 (ESCHCHCHDQAGHQQRESVH) are enriched in basic and acidic residues. Positions 1413 to 1436 (PQAGPGQPSQSGSRRSPRSSPVHP) are enriched in low complexity. A phosphoserine mark is found at serine 1438 and serine 1439. Residues 1454–1464 (SGHGHGQGQGQ) are compositionally biased toward gly residues. A Filaggrin 9 repeat occupies 1474–1522 (HGQRGRPQGPTQDSSRQPQAGQGQPSQSGSGRSPRRSPVHPESSEGEEH). Residues 1487–1505 (SSRQPQAGQGQPSQSGSGR) show a composition bias toward low complexity. Residues serine 1510, serine 1516, and serine 1517 each carry the phosphoserine modification. Residues 1532–1544 (SGHGHGHGQGQGQ) are compositionally biased toward gly residues. A compositionally biased stretch (low complexity) spans 1567 to 1585 (SSRQPQAGQGQPSQSGSGR). Phosphoserine is present on residues serine 1590, serine 1596, and serine 1597. Composition is skewed to low complexity over residues 1643 to 1661 (SSRQ…GSGR) and 1683 to 1696 (QRHS…GQGQ). The span at 1698 to 1708 (HAEHQQRESVH) shows a compositional bias: basic and acidic residues. The Filaggrin 10 repeat unit spans residues 1723–1756 (RQPQAGQGQPSLSGSGRSPRRSPVHPESSEGEEH). Residues 1724 to 1739 (QPQAGQGQPSLSGSGR) show a composition bias toward low complexity. A phosphoserine mark is found at serine 1744, serine 1750, serine 1751, serine 1824, serine 1830, and serine 1831. Low complexity predominate over residues 1801 to 1825 (SSRQPQAGQGQPSQSGSGRSPGRSP). Positions 1829–1848 (ESSEGEEHSVVPQRHSESGH) are enriched in basic and acidic residues. A compositionally biased stretch (low complexity) spans 1879–1897 (SSRQPQAGQGQPSQSGSGR). 3 positions are modified to phosphoserine: serine 1902, serine 1908, and serine 1909. Positions 1924–1934 (SGHGHGQGQGQ) are enriched in gly residues. The span at 1949–1975 (RPQGPSQDSSSQPQASQGQPSQSGSGR) shows a compositional bias: low complexity. Residues serine 1980, serine 1986, and serine 1987 each carry the phosphoserine modification. Over residues 2002-2012 (SGHGHGQGQGQ) the composition is skewed to gly residues. The stretch at 2016 to 2070 (QQRESLHGQRGRSQSPFHPSHSIHWQSKCTISKKSSRLSGHYGRNHFQSTISGNQ) is one Filaggrin 11 repeat. Composition is skewed to polar residues over residues 2026 to 2048 (GRSQ…TISK), 2061 to 2079 (HFQS…SSRH), and 2100 to 2109 (LRSNSQSSIP). Serine 2104 bears the Phosphoserine mark. The Filaggrin 12 repeat unit spans residues 2218 to 2259 (DDSQYILFQKHLESPSFGNQSGFSPNERQLYTCNESIDSYHL).

This sequence belongs to the S100-fused protein family. In the N-terminal section; belongs to the S-100 family. Post-translationally, deiminated by PADI1, PADI2 or PADI3 in vitro. The deiminated form is degraded by calpain-1/CAPN1 more quickly and into shorter peptides than the intact protein. In terms of processing, may be processed by calpain-1/CAPN1.

Its subcellular location is the cytoplasm. It is found in the cytoplasmic granule. Essential for normal cell-cell adhesion in the cornified cell layers. Important for proper integrity and mechanical strength of the stratum corneum of the epidermis. The sequence is that of Filaggrin-2 (Flg2) from Mus musculus (Mouse).